The chain runs to 416 residues: Enterobactin exporter EntS (416 aa).

At 1 to 21 (MNRQSWLLNLSLLKTHPAFRA) the chain is on the cytoplasmic side. The chain crosses the membrane as a helical span at residues 22-42 (VFLARFISIVSLGLLGVAVPV). Topologically, residues 43 to 55 (QIQMMTHSTWQVG) are periplasmic. A helical transmembrane segment spans residues 56–76 (LSVTLTGSAMFVGLMVGGVLA). The Cytoplasmic segment spans residues 77-83 (DRYERKK). Residues 84-104 (VILLARGTCGIGFIGLCLNAL) traverse the membrane as a helical segment. Over 105-109 (LPEPS) the chain is Periplasmic. A helical transmembrane segment spans residues 110–130 (LLAIYLLGLWDGFFASLGVTA). Over 131–156 (LLAATPALVGRENLMQAGAITMLTVR) the chain is Cytoplasmic. Residues 157 to 177 (LGSVISPMLGGVLLATGGVAW) traverse the membrane as a helical segment. Residue asparagine 178 is a topological domain, periplasmic. The chain crosses the membrane as a helical span at residues 179-199 (YGLAAAGTFITLLPLLSLPAL). The Cytoplasmic segment spans residues 200-218 (PPPPQPREHPLKSLLAAFR). A helical membrane pass occupies residues 219–239 (FLLSSPLIGGIALLGGLLTMA). The Periplasmic segment spans residues 240 to 256 (SAVRVLYPALAINWHMS). A helical transmembrane segment spans residues 257-277 (AAQIGLLYAAIPLGAAVGALT). Residues 278–287 (SGQLAHSVRP) lie on the Cytoplasmic side of the membrane. The chain crosses the membrane as a helical span at residues 288 to 307 (GLLMLVSTVGSFLAIGVFGL). The Periplasmic segment spans residues 308–313 (MPVWLL). A helical transmembrane segment spans residues 314–336 (GVICLALFGWLSAISSLLQYTLL). The Cytoplasmic segment spans residues 337-356 (QTQTPEAMLGRINGLWTAQN). The helical transmembrane segment at 357-377 (VTGDAIGAALLGGLGAMMTPV) threads the bilayer. Position 378 (alanine 378) is a topological domain, periplasmic. Residues 379–399 (SASVSGFGLVIVGLLLMLLLG) traverse the membrane as a helical segment. The Cytoplasmic portion of the chain corresponds to 400-416 (ELRRFRQPPPVPDGAPL).

Belongs to the major facilitator superfamily. EntS (TC 2.A.1.38) family.

It is found in the cell inner membrane. Its function is as follows. Component of an export pathway for enterobactin. The protein is Enterobactin exporter EntS of Citrobacter koseri (strain ATCC BAA-895 / CDC 4225-83 / SGSC4696).